The primary structure comprises 884 residues: MTDVVRDFDALYAKLEAPPHNLRLVLECCAPESGPLDLAAIQERKSYTCCALNNRRNCVLHKCVVVVFGTALDARLRAPSAEFDAQNNLRGTFMLDGRFLSFPNIMMNNNVLMHNFYDKLYAKHCKRMFLYGNVDAEKHINRAIQLVYDKATRRLFARDVYASDYVVTDDLNAVLETYLASSGKWRPLDHLFRYSKAHKQQLVDHIKMIMHHDICYSIDNLANKIIYKHAYLMELLLTSTVLQHYQKRAGENEALKRRLECEGEPPASKRRKAQSVLYGKESKKIVDSVVNGRLIYCVSKTFSKQRRSFPNQHDNCSNNNIEISLPVLKYRVGSEVTRITNDSVRQKMLKQKKDFVKFIGSFFHGEMTVAGKKFFLCRNARLPNVDYAMVADKFAELQQFGLVAPVHDLAHCADGALLIAFNDRPTNLQCARADVPKIVYRLKRDRCPIELKASSNILYVNHHEGMVCIAKRVRIGAPVNASINALLTPYEYHYKNSLFHAPTVSACEIEESDDVRCLMSKLEQYYFAEYTHLFYTIPVPKMIVALTNLKNAMPVLRYSTLGTAPVGLSVAVGDHVLMNNKMVKLWTLVRDSKLMTAEDPYIPHMALPIRLYNHKVNKLKGKLALAGKAVPTLKFVASSGPHNCVVLPDNMVQYFAGTVLSGAKIVWAHDGKRCMVEACTNGAHNVYKVYVFFRRTRNQAVESLAASMTLAGDAVIVRTAVVTSTDDLEGVKVCSVHGQKGVLNRSEDLTEWMAEDGTHAQICLSPVSYLSRQSNFERLERKYVVRGGNHADPRARRYPIFNIPYMLFNNTPDNIYKEFNKKNYTGHEKVEGTRFDQWTKNQSFVGNRLAESLQWMRGGSNLPQNCGEFEVVSSLLMCNNVVMK.

It belongs to the RNA polymerase beta chain family.

The catalysed reaction is RNA(n) + a ribonucleoside 5'-triphosphate = RNA(n+1) + diphosphate. Functionally, required for late and very late gene expression. May be a component of the novel RNA polymerase activity induced by baculovirus infection. This Orgyia pseudotsugata multicapsid polyhedrosis virus (OpMNPV) protein is Probable DNA-directed RNA polymerase subunit beta (LEF-8).